A 607-amino-acid chain; its full sequence is ATP-dependent zinc metalloprotease FtsH 2 (607 aa).

At 1–2 the chain is on the cytoplasmic side; the sequence is MR. Residues 3–23 traverse the membrane as a helical segment; sequence SLWIVLVLVLGSALLLQVMAA. At 24–99 the chain is on the periplasmic side; that stretch reads SDDRIPYARF…PYTRVADELG (76 aa). Residues 100–120 form a helical membrane-spanning segment; the sequence is LPPYLWLLLPLAGLAAMGHLA. At 121–607 the chain is on the cytoplasmic side; sequence SRRATTAGTI…LREMVASGEA (487 aa). Residue 195–202 participates in ATP binding; the sequence is GPPGTGKT. His-418 serves as a coordination point for Zn(2+). Glu-419 is an active-site residue. Positions 422 and 495 each coordinate Zn(2+).

This sequence in the central section; belongs to the AAA ATPase family. It in the C-terminal section; belongs to the peptidase M41 family. In terms of assembly, homohexamer. Requires Zn(2+) as cofactor.

The protein localises to the cell inner membrane. Its function is as follows. Acts as a processive, ATP-dependent zinc metallopeptidase for both cytoplasmic and membrane proteins. Plays a role in the quality control of integral membrane proteins. This chain is ATP-dependent zinc metalloprotease FtsH 2, found in Sorangium cellulosum (strain So ce56) (Polyangium cellulosum (strain So ce56)).